Reading from the N-terminus, the 216-residue chain is MIITIDGPSGTGKSTTAKALADHLHFNYCNTGKMYRTLAYARLQSPWATLPLTKFLEEPPFSFTFATGQPLESFFNGHLLTSELTTQEVANAASELSQLPEVRAFMQDLQRRYAQLGNCVFEGRDMGSKVFPNADLKIFLTSSPEVRAQRRLKDLPEGTLSPEQLQAELVKRDAADAQRAHDPLVIPENGIVIDSSDLTIRQVLEKILALLFRNEL.

7–15 serves as a coordination point for ATP; the sequence is GPSGTGKST.

It belongs to the cytidylate kinase family. Type 1 subfamily.

It localises to the cytoplasm. It catalyses the reaction CMP + ATP = CDP + ADP. The catalysed reaction is dCMP + ATP = dCDP + ADP. The chain is Cytidylate kinase from Chlamydia pneumoniae (Chlamydophila pneumoniae).